We begin with the raw amino-acid sequence, 352 residues long: Fe(3+) ions import ATP-binding protein FbpC (352 aa).

Residues 5–239 (LHIGHLSKSF…PADLDAALFI (235 aa)) enclose the ABC transporter domain. 37–44 (GASGCGKT) is a binding site for ATP.

The protein belongs to the ABC transporter superfamily. Fe(3+) ion importer (TC 3.A.1.10) family. As to quaternary structure, the complex is composed of two ATP-binding proteins (FbpC), two transmembrane proteins (FbpB) and a solute-binding protein (FbpA).

It is found in the cell inner membrane. The enzyme catalyses Fe(3+)(out) + ATP + H2O = Fe(3+)(in) + ADP + phosphate + H(+). Functionally, part of the ABC transporter complex FbpABC involved in Fe(3+) ions import. Responsible for energy coupling to the transport system. The sequence is that of Fe(3+) ions import ATP-binding protein FbpC from Neisseria meningitidis serogroup A / serotype 4A (strain DSM 15465 / Z2491).